Here is a 298-residue protein sequence, read N- to C-terminus: Lipoyl synthase (298 aa).

The [4Fe-4S] cluster site is built by Cys-43, Cys-48, Cys-54, Cys-69, Cys-73, Cys-76, and Ser-280. The 215-residue stretch at 55–269 folds into the Radical SAM core domain; that stretch reads FSSGTATFLI…AACGRGMGIP (215 aa).

Belongs to the radical SAM superfamily. Lipoyl synthase family. [4Fe-4S] cluster is required as a cofactor.

The protein localises to the cytoplasm. It catalyses the reaction [[Fe-S] cluster scaffold protein carrying a second [4Fe-4S](2+) cluster] + N(6)-octanoyl-L-lysyl-[protein] + 2 oxidized [2Fe-2S]-[ferredoxin] + 2 S-adenosyl-L-methionine + 4 H(+) = [[Fe-S] cluster scaffold protein] + N(6)-[(R)-dihydrolipoyl]-L-lysyl-[protein] + 4 Fe(3+) + 2 hydrogen sulfide + 2 5'-deoxyadenosine + 2 L-methionine + 2 reduced [2Fe-2S]-[ferredoxin]. It functions in the pathway protein modification; protein lipoylation via endogenous pathway; protein N(6)-(lipoyl)lysine from octanoyl-[acyl-carrier-protein]: step 2/2. Its function is as follows. Catalyzes the radical-mediated insertion of two sulfur atoms into the C-6 and C-8 positions of the octanoyl moiety bound to the lipoyl domains of lipoate-dependent enzymes, thereby converting the octanoylated domains into lipoylated derivatives. The chain is Lipoyl synthase from Nitratidesulfovibrio vulgaris (strain ATCC 29579 / DSM 644 / CCUG 34227 / NCIMB 8303 / VKM B-1760 / Hildenborough) (Desulfovibrio vulgaris).